Here is a 469-residue protein sequence, read N- to C-terminus: 3-isopropylmalate dehydratase large subunit (469 aa).

Residues cysteine 349, cysteine 410, and cysteine 413 each coordinate [4Fe-4S] cluster.

The protein belongs to the aconitase/IPM isomerase family. LeuC type 1 subfamily. In terms of assembly, heterodimer of LeuC and LeuD. The cofactor is [4Fe-4S] cluster.

The catalysed reaction is (2R,3S)-3-isopropylmalate = (2S)-2-isopropylmalate. It participates in amino-acid biosynthesis; L-leucine biosynthesis; L-leucine from 3-methyl-2-oxobutanoate: step 2/4. Functionally, catalyzes the isomerization between 2-isopropylmalate and 3-isopropylmalate, via the formation of 2-isopropylmaleate. This is 3-isopropylmalate dehydratase large subunit from Neisseria meningitidis serogroup B (strain ATCC BAA-335 / MC58).